The chain runs to 1356 residues: Pleckstrin homology domain-containing family H member 1 (1356 aa).

Residues 27–172 (FRLQASKIRE…QDALEDLRMT (146 aa)) are a coiled coil. Disordered stretches follow at residues 179–203 (VVPEGTPERDPVPSGPSDQPVEQDS), 256–314 (HLQK…PKVR), and 354–414 (LHSP…PPLH). Composition is skewed to polar residues over residues 194–203 (PSDQPVEQDS), 256–265 (HLQKEGSPSQ), and 285–297 (VTAQGGTFPGTKT). Positions 359-407 (SSKSEARAKVREEAEKMEMEALPPSGKQEERESLKSRRGELEDVELENK) form a coiled coil. Basic and acidic residues-rich tracts occupy residues 362 to 377 (SEARAKVREEAEKMEM) and 385 to 399 (KQEERESLKSRRGEL). Serine 451 is modified (phosphoserine). 2 PH domains span residues 572-666 (ALEK…SLLK) and 681-790 (KPTV…VAAG). Serine 739 carries the phosphoserine modification. In terms of domain architecture, MyTH4 spans 826-980 (YSQEGLCASL…PSRMEVVSIL (155 aa)). In terms of domain architecture, FERM spans 991–1327 (FSIPVHFANG…NHCSATVNLS (337 aa)).

This Mus musculus (Mouse) protein is Pleckstrin homology domain-containing family H member 1 (Plekhh1).